Consider the following 277-residue polypeptide: Inositol monophosphatase 1 (277 aa).

4 residues coordinate Mg(2+): Glu70, Asp90, Ile92, and Asp93. Glu70 is a substrate binding site. 92 to 95 lines the substrate pocket; the sequence is IDGT. Thr168 carries the post-translational modification Phosphothreonine. Residues 194-196, Glu213, and Asp220 contribute to the substrate site; that span reads GTA. Asp220 contacts Mg(2+).

It belongs to the inositol monophosphatase superfamily. As to quaternary structure, homodimer. Mg(2+) is required as a cofactor.

It is found in the cytoplasm. The catalysed reaction is a myo-inositol phosphate + H2O = myo-inositol + phosphate. It carries out the reaction 1D-myo-inositol 1-phosphate + H2O = myo-inositol + phosphate. It catalyses the reaction 1D-myo-inositol 2-phosphate + H2O = myo-inositol + phosphate. The enzyme catalyses 1D-myo-inositol 3-phosphate + H2O = myo-inositol + phosphate. The catalysed reaction is 1D-myo-inositol 4-phosphate + H2O = myo-inositol + phosphate. It carries out the reaction 1D-myo-inositol 5-phosphate + H2O = myo-inositol + phosphate. It catalyses the reaction 1D-myo-inositol 6-phosphate + H2O = myo-inositol + phosphate. The enzyme catalyses scyllo-inositol 1-phosphate + H2O = scyllo-inositol + phosphate. The catalysed reaction is alpha-D-galactose 1-phosphate + H2O = D-galactose + phosphate. It carries out the reaction alpha-D-glucose 1-phosphate + H2O = D-glucose + phosphate. It catalyses the reaction D-glucose 6-phosphate + H2O = D-glucose + phosphate. The enzyme catalyses beta-D-fructose 1-phosphate + H2O = D-fructose + phosphate. The catalysed reaction is glycerol 2-phosphate + H2O = glycerol + phosphate. It carries out the reaction adenosine 2'-phosphate + H2O = adenosine + phosphate. Its pathway is polyol metabolism; myo-inositol biosynthesis; myo-inositol from D-glucose 6-phosphate: step 2/2. Its activity is regulated as follows. Inhibited by Li(+), Ca(2+) and Mn(2+), but also by Mg(2+) at concentrations above 3 mM. Functionally, phosphatase involved in the dephosphorylation of myo-inositol monophosphate to generate myo-inositol. Is also able to dephosphorylate scyllo-inositol-phosphate, myo-inositol 1,4-diphosphate, scyllo-inositol-1,3-diphosphate and scyllo-inositol-1,4-diphosphate. Also dephosphorylates in vitro other sugar-phosphates including D-galactose-1-phosphate, glucose-1-phosphate, glucose-6-phosphate, fructose-1-phosphate, beta-glycerophosphate and 2'-AMP. Responsible for the provision of inositol required for synthesis of phosphatidylinositol and polyphosphoinositides, and involved in maintaining normal brain function. Has been implicated as the pharmacological target for lithium Li(+) action in brain. The sequence is that of Inositol monophosphatase 1 (IMPA1) from Pongo abelii (Sumatran orangutan).